Here is a 176-residue protein sequence, read N- to C-terminus: Ribosome rescue factor SmrB (176 aa).

A Smr domain is found at 97 to 172 (LDMHGMTQQE…GNGALLVLID (76 aa)).

This sequence belongs to the SmrB family. Associates with collided ribosomes, but not with correctly translating polysomes.

Functionally, acts as a ribosome collision sensor. Detects stalled/collided disomes (pairs of ribosomes where the leading ribosome is stalled and a second ribosome has collided with it) and endonucleolytically cleaves mRNA at the 5' boundary of the stalled ribosome. Stalled/collided disomes form a new interface (primarily via the 30S subunits) that binds SmrB. Cleaved mRNA becomes available for tmRNA ligation, leading to ribosomal subunit dissociation and rescue of stalled ribosomes. The protein is Ribosome rescue factor SmrB of Photobacterium profundum (strain SS9).